The chain runs to 163 residues: Glutathione peroxidase 2 (163 aa).

The active site involves Cys36.

The protein belongs to the glutathione peroxidase family.

The protein resides in the cytoplasm. The enzyme catalyses 2 glutathione + H2O2 = glutathione disulfide + 2 H2O. Functionally, may constitute a glutathione peroxidase-like protective system against oxidative stresses. The polypeptide is Glutathione peroxidase 2 (gpx-2) (Caenorhabditis elegans).